The chain runs to 312 residues: Protein-methionine-sulfoxide reductase catalytic subunit MsrP (312 aa).

Residues 1–42 (MALFRYPRPLPSEITPRDMYLSRRSLIGGAAALGAVSATADA) constitute a signal peptide (tat-type signal). Residues Asn68, 71 to 72 (YE), Cys126, Ser161, Asn211, Arg216, and 227 to 229 (GIK) each bind Mo-molybdopterin.

Belongs to the MsrP family. Heterodimer of a catalytic subunit (MsrP) and a heme-binding subunit (MsrQ). It depends on Mo-molybdopterin as a cofactor. In terms of processing, predicted to be exported by the Tat system. The position of the signal peptide cleavage has not been experimentally proven.

The protein resides in the periplasm. The enzyme catalyses L-methionyl-[protein] + a quinone + H2O = L-methionyl-(S)-S-oxide-[protein] + a quinol. It carries out the reaction L-methionyl-[protein] + a quinone + H2O = L-methionyl-(R)-S-oxide-[protein] + a quinol. Its function is as follows. Part of the MsrPQ system that repairs oxidized periplasmic proteins containing methionine sulfoxide residues (Met-O), using respiratory chain electrons. Thus protects these proteins from oxidative-stress damage caused by reactive species of oxygen and chlorine generated by the host defense mechanisms. MsrPQ is essential for the maintenance of envelope integrity under bleach stress, rescuing a wide series of structurally unrelated periplasmic proteins from methionine oxidation. The catalytic subunit MsrP is non-stereospecific, being able to reduce both (R-) and (S-) diastereoisomers of methionine sulfoxide. The chain is Protein-methionine-sulfoxide reductase catalytic subunit MsrP from Gluconobacter oxydans (strain 621H) (Gluconobacter suboxydans).